The sequence spans 379 residues: Homoserine O-succinyltransferase (379 aa).

In terms of domain architecture, AB hydrolase-1 spans 51 to 360; sequence NAVLICHALS…DAPQGHDAFL (310 aa). The Nucleophile role is filled by Ser-157. Arg-227 contributes to the substrate binding site. Catalysis depends on residues Asp-323 and His-356. Asp-357 serves as a coordination point for substrate.

This sequence belongs to the AB hydrolase superfamily. MetX family. In terms of assembly, homodimer.

It localises to the cytoplasm. The catalysed reaction is L-homoserine + succinyl-CoA = O-succinyl-L-homoserine + CoA. Its pathway is amino-acid biosynthesis; L-methionine biosynthesis via de novo pathway; O-succinyl-L-homoserine from L-homoserine: step 1/1. Its function is as follows. Transfers a succinyl group from succinyl-CoA to L-homoserine, forming succinyl-L-homoserine. This is Homoserine O-succinyltransferase from Pseudomonas aeruginosa (strain LESB58).